The chain runs to 829 residues: Periplasmic nitrate reductase (829 aa).

Positions 1–30 form a signal peptide, tat-type signal; it reads MKLSRRDFMKANAVAAAAAVAGVSAPTLAA. The region spanning 41-97 is the 4Fe-4S Mo/W bis-MGD-type domain; it reads ITWDKAPCRFCGTGCSVLVGSQDGRVVATQGDPDAPVNRGLNCIKGYFLSKIMYGQD. Residues C48, C51, C55, and C83 each coordinate [4Fe-4S] cluster. Residues K85, Q152, N177, C181, 214–221, 245–249, 264–266, M374, Q378, N484, 510–511, K533, D560, and 719–728 contribute to the Mo-bis(molybdopterin guanine dinucleotide) site; these read WGSNMAEM, STFEH, QTD, SD, and TGRVLEHWHT. F795 contacts substrate. 2 residues coordinate Mo-bis(molybdopterin guanine dinucleotide): N803 and K820.

The protein belongs to the prokaryotic molybdopterin-containing oxidoreductase family. NasA/NapA/NarB subfamily. Component of the periplasmic nitrate reductase NapAB complex composed of NapA and NapB. Requires [4Fe-4S] cluster as cofactor. It depends on Mo-bis(molybdopterin guanine dinucleotide) as a cofactor. Post-translationally, predicted to be exported by the Tat system. The position of the signal peptide cleavage has not been experimentally proven.

The protein resides in the periplasm. The enzyme catalyses 2 Fe(II)-[cytochrome] + nitrate + 2 H(+) = 2 Fe(III)-[cytochrome] + nitrite + H2O. Functionally, catalytic subunit of the periplasmic nitrate reductase complex NapAB. Receives electrons from NapB and catalyzes the reduction of nitrate to nitrite. This chain is Periplasmic nitrate reductase, found in Aeromonas hydrophila subsp. hydrophila (strain ATCC 7966 / DSM 30187 / BCRC 13018 / CCUG 14551 / JCM 1027 / KCTC 2358 / NCIMB 9240 / NCTC 8049).